A 91-amino-acid chain; its full sequence is Small ribosomal subunit protein bS18 (91 aa).

This sequence belongs to the bacterial ribosomal protein bS18 family. In terms of assembly, part of the 30S ribosomal subunit. Forms a tight heterodimer with protein bS6.

In terms of biological role, binds as a heterodimer with protein bS6 to the central domain of the 16S rRNA, where it helps stabilize the platform of the 30S subunit. This Burkholderia vietnamiensis (strain G4 / LMG 22486) (Burkholderia cepacia (strain R1808)) protein is Small ribosomal subunit protein bS18.